The following is a 222-amino-acid chain: Collectrin (222 aa).

The signal sequence occupies residues Met-1–Ala-14. The Extracellular segment spans residues Glu-15 to Pro-141. In terms of domain architecture, Collectrin-like spans Ala-21–Leu-222. Asn-76 and Asn-93 each carry an N-linked (GlcNAc...) asparagine glycan. The helical transmembrane segment at Val-142–Val-162 threads the bilayer. At Leu-163–Leu-222 the chain is on the cytoplasmic side. A phosphothreonine mark is found at Thr-214 and Thr-220.

This sequence belongs to the CLTRN family. As to quaternary structure, monomer. Homodimer; dimerization prevents CLTRN cleavage by BACE2. Interacts with SLC6A18; this interaction regulates the trafficking of SLC6A18 to the cell membrane and its amino acid transporter activity. Interacts with SLC6A19; this interaction regulates the trafficking of SLC6A19 to the cell membrane and its amino acid transporter activity. Interacts with SNAPIN. Glycosylated. Glycosylation is required for plasma membrane localization and for its cleavage by BACE2. Post-translationally, proteolytically processed in pancreatic beta cells by BACE2 leading to the generation and extracellular release of soluble CLTRN, and a corresponding cell-associated C-terminal fragment which is later cleaved by gamma-secretase. This shedding process inactivates CLTRN. Three cleavage sites have been identified for BACE2, two clustered sites after Phe-116 and Leu-118 and a more membrane proximal site at Phe-125; the preferred BACE2 cleavage site seems to be between Phe-125 and Leu-126, Phe-116 and Leu-118 act as alternative sites. As to expression, kidney; collecting ducts. Pancreas; beta cells of islets.

It is found in the cell membrane. In terms of biological role, plays an important role in amino acid transport by acting as binding partner of amino acid transporters SLC6A18 and SLC6A19, regulating their trafficking on the cell surface and their activity. May also play a role in trafficking of amino acid transporters SLC3A1 and SLC7A9 to the renal cortical cell membrane. Regulator of SNARE complex function. Stimulator of beta cell replication. The protein is Collectrin of Rattus norvegicus (Rat).